A 63-amino-acid polypeptide reads, in one-letter code: Eumenitin VP1 (63 aa).

The first 22 residues, 1–22 (MRGTSFILFAVVVILGFLHANA), serve as a signal peptide directing secretion. AXPX repeat units lie at residues 22 to 25 (AEPL), 26 to 29 (ANPA), 32 to 35 (ANPD), 40 to 43 (ADPL), and 44 to 47 (ADPE). A propeptide spanning residues 23-48 (EPLANPAPLANPDPLANADPLADPEA) is cleaved from the precursor.

In terms of tissue distribution, expressed by the venom gland.

Its subcellular location is the secreted. It is found in the target cell membrane. In terms of biological role, antimicrobial peptide with activities against the fungi B.cinerea (MIC=5 uM) and C.albicans (MIC=100 uM), the Gram-negative bacterium E.coli (MIC=25 uM) and the Gram-positive bacterium S.aureus (MIC=100 uM). Shows cytolytic activity against insect cell lines. Has no hemolytic activity against human erythrocytes. In vivo, peptide injection in the vicinity of the head and thorax of lepidopteran larvae induces feeding disorder followed by death due to starvation. The sequence is that of Eumenitin VP1 from Eumenes pomiformis (Potter wasp).